We begin with the raw amino-acid sequence, 131 residues long: Small ribosomal subunit protein bS6m (131 aa).

The protein belongs to the bacterial ribosomal protein bS6 family. Component of the mitochondrial small ribosomal subunit (mt-SSU). Mature yeast 74S mitochondrial ribosomes consist of a small (37S) and a large (54S) subunit. The 37S small subunit contains a 15S ribosomal RNA (15S mt-rRNA) and 34 different proteins. The 54S large subunit contains a 21S rRNA (21S mt-rRNA) and 46 different proteins.

The protein resides in the mitochondrion. Component of the mitochondrial ribosome (mitoribosome), a dedicated translation machinery responsible for the synthesis of mitochondrial genome-encoded proteins, including at least some of the essential transmembrane subunits of the mitochondrial respiratory chain. The mitoribosomes are attached to the mitochondrial inner membrane and translation products are cotranslationally integrated into the membrane. This is Small ribosomal subunit protein bS6m (MRP17) from Saccharomyces cerevisiae (strain ATCC 204508 / S288c) (Baker's yeast).